The chain runs to 422 residues: Zinc-regulated transporter 2 (422 aa).

Residues 1 to 27 (MVDLIARDDSVDTCQASNGYNGHAGLR) lie on the Extracellular side of the membrane. Residues 28-48 (ILAVFIILISSGLGVYFPILS) traverse the membrane as a helical segment. Residues 49-60 (SRYSFIRLPNWC) are Cytoplasmic-facing. A helical transmembrane segment spans residues 61–81 (FFIAKFFGSGVIVATAFVHLL). Topologically, residues 82 to 99 (QPAAEALGDECLGGTFAE) are extracellular. A helical transmembrane segment spans residues 100 to 120 (YPWAFGICLMSLFLLFFTEII). Topologically, residues 121-262 (THYFVAKTLG…EEDKEQYLNQ (142 aa)) are cytoplasmic. A phosphoserine mark is found at serine 148, serine 149, serine 162, and serine 170. Threonine 188 is subject to Phosphothreonine. The chain crosses the membrane as a helical span at residues 263–283 (ILAVFILEFGIIFHSVFVGLS). Residues 284 to 290 (LSVAGEE) are Extracellular-facing. A helical transmembrane segment spans residues 291-311 (FETLFIVLTFHQMFEGLGLGT). The Cytoplasmic segment spans residues 312–326 (RVAETNWPESKKYMP). A helical transmembrane segment spans residues 327–347 (WLMGLAFTLTSPIAVAVGIGV). Over 348-358 (RHSWIPGSRRA) the chain is Extracellular. Residues 359-379 (LIANGVFDSISSGILIYTGLV) traverse the membrane as a helical segment. The Cytoplasmic portion of the chain corresponds to 380–400 (ELMAHEFLYSNQFKGPDGLKK). Residues 401 to 421 (MLSAYLIMCCGAALMALLGKW) form a helical membrane-spanning segment. Position 422 (alanine 422) is a topological domain, extracellular.

It belongs to the ZIP transporter (TC 2.A.5) family.

The protein localises to the membrane. Functionally, low-affinity zinc transport protein. Active in zinc-replete cells and is time-, temperature- and concentration-dependent and prefers zinc over other metals as its substrate. The chain is Zinc-regulated transporter 2 (ZRT2) from Saccharomyces cerevisiae (strain ATCC 204508 / S288c) (Baker's yeast).